A 115-amino-acid chain; its full sequence is Ustilagic acid biosynthesis cluster protein orf3 (115 aa).

Positions 1 to 38 are cleaved as a signal peptide; the sequence is MTYSKIACSLGKRGIARAPNQASSFFLLLFLFAKFSQQ. The segment at 42–62 is disordered; sequence SPCLASSGVAKSRGPASTDRP.

Its pathway is secondary metabolite biosynthesis. In terms of biological role, part of the gene cluster that mediates the biosynthesis of the glycolipid biosurfactant ustilagic acid (UA). UA is a secreted cellobiose glycolipid that is toxic for many microorganisms and confers biocontrol activity to U.maydis. UA consists of 15,16-dihydroxypalmitic or 2,15,16-trihydroxypalmitic acid, which is O-glycosidically linked to cellobiose at its terminal hydroxyl group. In addition, the cellobiose moiety is acetylated and acylated with a short-chain hydroxy fatty acid. UA biosynthesis starts with omega-hydroxylation of palmitic acid catalyzed by the cytochrome P450 monooxygenase cyp1. Terminal hydroxylation of palmitic acid precedes subterminal hydroxylation catalyzed by the cytochrome P450 monooxygenase cyp2. Sequential glucosylation of the hydroxy fatty acid is probably catalyzed by the glycosyltransferase ugt1. The cellobiose lipid is further decorated by acetylation of the proximal glucose residue and by acylation with a short-chain beta-hydroxy fatty acid at the distal glucose residue. The acyltransferase uat1 may be a good candidate for catalyzing either acetylation or acylation of the cellobiose lipid. The fatty acid synthase fas2 may be involved in synthesis of the carbon backbone of the short-chain beta-hydroxy fatty acid esterified to the cellobiose disaccharide. The secreted UA consists of a mixture of both alpha-hydroxylated and non-hydroxylated glycolipids; therefore, alpha-hydroxylation of the long-chain fatty, catalyzed by the fatty acid hydroxylase ahd1, occurs late in UA biosynthesis and may be the last step before secretion. This is Ustilagic acid biosynthesis cluster protein orf3 from Mycosarcoma maydis (Corn smut fungus).